The sequence spans 454 residues: NADP-specific glutamate dehydrogenase (454 aa).

At Ser2 the chain carries N-acetylserine. Lys114 is a catalytic residue.

It belongs to the Glu/Leu/Phe/Val dehydrogenases family. Homohexamer.

The enzyme catalyses L-glutamate + NADP(+) + H2O = 2-oxoglutarate + NH4(+) + NADPH + H(+). This is NADP-specific glutamate dehydrogenase (GDH) from Neurospora sitophila (Chrysonilia sitophila).